Here is a 375-residue protein sequence, read N- to C-terminus: Chaperone protein DnaJ (375 aa).

The J domain occupies 4 to 68; that stretch reads DYYETLGVDR…ETRARYDQFG (65 aa). The CR-type zinc-finger motif lies at 134-216; the sequence is GGEKEIRIPH…CGGAGRKQET (83 aa). The Zn(2+) site is built by cysteine 147, cysteine 150, cysteine 164, cysteine 167, cysteine 190, cysteine 193, cysteine 204, and cysteine 207. CXXCXGXG motif repeat units lie at residues 147 to 154, 164 to 171, 190 to 197, and 204 to 211; these read CQVCNGSG, CSTCNGAG, CPDCNGAG, and CDACGGAG.

It belongs to the DnaJ family. In terms of assembly, homodimer. Zn(2+) is required as a cofactor.

The protein localises to the cytoplasm. Its function is as follows. Participates actively in the response to hyperosmotic and heat shock by preventing the aggregation of stress-denatured proteins and by disaggregating proteins, also in an autonomous, DnaK-independent fashion. Unfolded proteins bind initially to DnaJ; upon interaction with the DnaJ-bound protein, DnaK hydrolyzes its bound ATP, resulting in the formation of a stable complex. GrpE releases ADP from DnaK; ATP binding to DnaK triggers the release of the substrate protein, thus completing the reaction cycle. Several rounds of ATP-dependent interactions between DnaJ, DnaK and GrpE are required for fully efficient folding. Also involved, together with DnaK and GrpE, in the DNA replication of plasmids through activation of initiation proteins. This is Chaperone protein DnaJ from Rippkaea orientalis (strain PCC 8801 / RF-1) (Cyanothece sp. (strain PCC 8801)).